We begin with the raw amino-acid sequence, 65 residues long: Putative antitoxin PF2058 (65 aa).

Belongs to the UPF0165 family.

Functionally, possibly the antitoxin component of a type II toxin-antitoxin (TA) system. This is Putative antitoxin PF2058 from Pyrococcus furiosus (strain ATCC 43587 / DSM 3638 / JCM 8422 / Vc1).